A 294-amino-acid polypeptide reads, in one-letter code: N-acetylmuramic acid 6-phosphate etherase (294 aa).

The SIS domain occupies 54-217 (VIASFRKGGR…STTSMIGVGK (164 aa)). Glu82 serves as the catalytic Proton donor. The active site involves Glu113.

The protein belongs to the GCKR-like family. MurNAc-6-P etherase subfamily. In terms of assembly, homodimer.

The enzyme catalyses N-acetyl-D-muramate 6-phosphate + H2O = N-acetyl-D-glucosamine 6-phosphate + (R)-lactate. Its pathway is amino-sugar metabolism; N-acetylmuramate degradation. In terms of biological role, specifically catalyzes the cleavage of the D-lactyl ether substituent of MurNAc 6-phosphate, producing GlcNAc 6-phosphate and D-lactate. The protein is N-acetylmuramic acid 6-phosphate etherase of Exiguobacterium sp. (strain ATCC BAA-1283 / AT1b).